The sequence spans 456 residues: Cytochrome P450 monooxygenase avaH (456 aa).

Residues leucine 243–isoleucine 263 form a helical membrane-spanning segment. Residue cysteine 403 coordinates heme.

It belongs to the cytochrome P450 family. The cofactor is heme.

It localises to the membrane. The protein operates within secondary metabolite biosynthesis. Cytochrome P450 monooxygenase; part of the cluster that mediates the biosynthesis of a highly modified cyclo-arginine-tryptophan dipeptide (cRW). The first step of the pathway is perfornmed by the arginine-containing cyclodipeptide synthase (RCPDS) avaA that acts as the scaffold-generating enzyme and is responsible for formation of the cyclo-Arg-Trp (cRW) diketopiperazine. AvaB then acts as a multifunctional flavoenzyme that is responsible for generating the cyclo-Arg-formylkynurenine DKP, which can be deformylated by avaC. AvaB then further catalyzes an additional N-oxidation followed by cyclization and dehydration. The next step is an N-acetylation of the guanidine group catalyzed by the arginine N-acetyltransferase avaD. The roles of the additional enzymes identified within the ava cluster still have to be determined. In Aspergillus versicolor, this protein is Cytochrome P450 monooxygenase avaH.